The sequence spans 500 residues: Nitrate/nitrite transporter NrtP (500 aa).

12 helical membrane passes run 19-39, 52-72, 79-99, 109-129, 147-167, 175-195, 220-240, 247-267, 364-384, 389-409, 425-445, and 451-471; these read WFAF…ATTI, TLGI…GMLL, ITYS…ALAQ, LLMG…AEWF, FGAF…SFFS, LAIA…YNTV, SFWA…LLAW, IHFL…GLFA, WTMT…HFIN, IPVA…GCGA, IAGN…TIFS, and TLFS…AFFL.

Belongs to the major facilitator superfamily. Nitrate/nitrite porter (TC 2.A.1.8) family.

The protein resides in the cell inner membrane. Transport system for both nitrate and nitrite, with much higher affinity for nitrate than for nitrite. This chain is Nitrate/nitrite transporter NrtP, found in Nostoc punctiforme (strain ATCC 29133 / PCC 73102).